The sequence spans 119 residues: Large ribosomal subunit protein bL20 (119 aa).

The protein belongs to the bacterial ribosomal protein bL20 family.

In terms of biological role, binds directly to 23S ribosomal RNA and is necessary for the in vitro assembly process of the 50S ribosomal subunit. It is not involved in the protein synthesizing functions of that subunit. This chain is Large ribosomal subunit protein bL20, found in Afipia carboxidovorans (strain ATCC 49405 / DSM 1227 / KCTC 32145 / OM5) (Oligotropha carboxidovorans).